A 713-amino-acid polypeptide reads, in one-letter code: Polyribonucleotide nucleotidyltransferase (713 aa).

Residues Asp493 and Asp499 each coordinate Mg(2+). The KH domain maps to 560–619 (PRMITIKINPEKIRDVIGKGGSVIRALTEETGTTIDISDDGVVTIASTNSEGMAEAKKRI). Residues 629 to 697 (GHVYEGTVLK…EKGRVRLSAK (69 aa)) form the S1 motif domain.

It belongs to the polyribonucleotide nucleotidyltransferase family. Mg(2+) serves as cofactor.

It localises to the cytoplasm. It catalyses the reaction RNA(n+1) + phosphate = RNA(n) + a ribonucleoside 5'-diphosphate. Functionally, involved in mRNA degradation. Catalyzes the phosphorolysis of single-stranded polyribonucleotides processively in the 3'- to 5'-direction. The protein is Polyribonucleotide nucleotidyltransferase of Burkholderia mallei (strain NCTC 10247).